We begin with the raw amino-acid sequence, 422 residues long: 5'-deoxyadenosine deaminase (422 aa).

Zn(2+)-binding residues include H57 and H59. Residues E86 and H178 each contribute to the substrate site. H205 is a Zn(2+) binding site. The substrate site is built by E208 and D294. Residue D294 participates in Zn(2+) binding.

Belongs to the metallo-dependent hydrolases superfamily. MTA/SAH deaminase family. As to quaternary structure, homotetramer. Zn(2+) is required as a cofactor.

The enzyme catalyses 5'-deoxyadenosine + H2O + H(+) = 5'-deoxyinosine + NH4(+). It catalyses the reaction S-adenosyl-L-homocysteine + H2O + H(+) = S-inosyl-L-homocysteine + NH4(+). The catalysed reaction is S-methyl-5'-thioadenosine + H2O + H(+) = S-methyl-5'-thioinosine + NH4(+). It carries out the reaction adenosine + H2O + H(+) = inosine + NH4(+). The protein operates within amino-acid biosynthesis; S-adenosyl-L-methionine biosynthesis. Functionally, catalyzes the deamination of three SAM-derived enzymatic products, namely 5'-deoxyadenosine, S-adenosyl-L-homocysteine, and 5'-methylthioadenosine, to produce the inosine analogs. Can also deaminate adenosine. The preferred substrate for this enzyme is 5'-deoxyadenosine, but all these substrates are efficiently deaminated. Likely functions in a S-adenosyl-L-methionine (SAM) recycling pathway from S-adenosyl-L-homocysteine (SAH) produced from SAM-dependent methylation reactions. May also be involved in the recycling of 5'-deoxyadenosine, whereupon the 5'-deoxyribose moiety of 5'-deoxyinosine is further metabolized to deoxyhexoses used for the biosynthesis of aromatic amino acids in methanogens. This Methanococcus vannielii (strain ATCC 35089 / DSM 1224 / JCM 13029 / OCM 148 / SB) protein is 5'-deoxyadenosine deaminase.